Reading from the N-terminus, the 352-residue chain is Photosystem II D2 protein (352 aa).

The residue at position 2 (Thr-2) is an N-acetylthreonine. Thr-2 carries the post-translational modification Phosphothreonine. The chain crosses the membrane as a helical span at residues 40–60; it reads TAYLALGGWFTGTTFVTSWYT. Residue His-117 participates in chlorophyll a binding. A helical transmembrane segment spans residues 124 to 140; the sequence is GFMLRQFEIARSVKIRP. Positions 129 and 142 each coordinate pheophytin a. Residues 152–165 traverse the membrane as a helical segment; that stretch reads VFVSVFLIYPLGQS. His-197 lines the chlorophyll a pocket. Residues 207-227 traverse the membrane as a helical segment; the sequence is AALLCAIHGATVENTLFEDGD. Positions 214 and 261 each coordinate a plastoquinone. Residue His-214 coordinates Fe cation. His-268 serves as a coordination point for Fe cation. The helical transmembrane segment at 278-294 threads the bilayer; the sequence is GLWMSAIGVVGLALNLR.

It belongs to the reaction center PufL/M/PsbA/D family. In terms of assembly, PSII is composed of 1 copy each of membrane proteins PsbA, PsbB, PsbC, PsbD, PsbE, PsbF, PsbH, PsbI, PsbJ, PsbK, PsbL, PsbM, PsbT, PsbX, PsbY, PsbZ, Psb30/Ycf12, at least 3 peripheral proteins of the oxygen-evolving complex and a large number of cofactors. It forms dimeric complexes. Requires The D1/D2 heterodimer binds P680, chlorophylls that are the primary electron donor of PSII, and subsequent electron acceptors. It shares a non-heme iron and each subunit binds pheophytin, quinone, additional chlorophylls, carotenoids and lipids. There is also a Cl(-1) ion associated with D1 and D2, which is required for oxygen evolution. The PSII complex binds additional chlorophylls, carotenoids and specific lipids. as cofactor.

Its subcellular location is the plastid. It localises to the chloroplast thylakoid membrane. The catalysed reaction is 2 a plastoquinone + 4 hnu + 2 H2O = 2 a plastoquinol + O2. Functionally, photosystem II (PSII) is a light-driven water:plastoquinone oxidoreductase that uses light energy to abstract electrons from H(2)O, generating O(2) and a proton gradient subsequently used for ATP formation. It consists of a core antenna complex that captures photons, and an electron transfer chain that converts photonic excitation into a charge separation. The D1/D2 (PsbA/PsbD) reaction center heterodimer binds P680, the primary electron donor of PSII as well as several subsequent electron acceptors. D2 is needed for assembly of a stable PSII complex. This chain is Photosystem II D2 protein, found in Chlorella vulgaris (Green alga).